Here is a 327-residue protein sequence, read N- to C-terminus: Serpentine receptor class alpha-33 (327 aa).

6 helical membrane-spanning segments follow: residues 20-40, 56-76, 133-153, 186-206, 227-247, and 270-290; these read FSVYFIDTSCIISMAVTVLAI, LLITDLVFINIHNLSYIFLQN, FSHANYGFLLAILSLIASTVF, IIPYLAICLTSIVCSLLLIIY, AVVSSISVAILGIIQLVLFCF, and IIGWFYTSPLNAIISPTAVFL.

Belongs to the nematode receptor-like protein sra family.

The protein resides in the membrane. The protein is Serpentine receptor class alpha-33 (sra-33) of Caenorhabditis elegans.